Consider the following 167-residue polypeptide: MRTLTIEPLTKEAFAPFGDVIETDGSDHFMINNGSTMRFHKLATVETATPEDNAIISIFRADAQDMPLTVSMLERHPLGSQAFIPLLGNPFLIVVAPLGDVPVSGLVRAFVTNGRQGINYHRGVWHHPVLTIEKRDDFLVVDRSGKGNNCDEHFFKEDERLILAPHQ.

This sequence belongs to the ureidoglycolate lyase family. As to quaternary structure, homodimer. Requires Ni(2+) as cofactor.

It catalyses the reaction (S)-ureidoglycolate = urea + glyoxylate. The protein operates within nitrogen metabolism; (S)-allantoin degradation. Its function is as follows. Catalyzes the catabolism of the allantoin degradation intermediate (S)-ureidoglycolate, generating urea and glyoxylate. Involved in the utilization of allantoin as nitrogen source. The sequence is that of Ureidoglycolate lyase from Pseudomonas fluorescens (strain Pf0-1).